The chain runs to 707 residues: Heat shock protein hsp88 (707 aa).

Over residues 662-692 the composition is skewed to basic and acidic residues; that stretch reads EAEKAAKKAEEEARKAKEAAEKAAQEGAKDD. The segment at 662 to 707 is disordered; that stretch reads EAEKAAKKAEEEARKAKEAAEKAAQEGAKDDEMTDADAPKPVVEEA.

It belongs to the heat shock protein 70 family. In terms of assembly, binds hsp30 independent of temperature or substrate. In terms of processing, the N-terminus is blocked.

It is found in the cytoplasm. This is Heat shock protein hsp88 (hsp88) from Neurospora crassa (strain ATCC 24698 / 74-OR23-1A / CBS 708.71 / DSM 1257 / FGSC 987).